A 323-amino-acid chain; its full sequence is Type II restriction enzyme BsoBI (323 aa).

Mg(2+) is bound by residues D212, E240, and K242.

In terms of assembly, homodimer.

The enzyme catalyses Endonucleolytic cleavage of DNA to give specific double-stranded fragments with terminal 5'-phosphates.. A P subtype restriction enzyme that recognizes the double-stranded sequence 5'-CYCGRG-3' and cleaves after C-1. This chain is Type II restriction enzyme BsoBI, found in Geobacillus stearothermophilus (Bacillus stearothermophilus).